A 194-amino-acid chain; its full sequence is Imidazoleglycerol-phosphate dehydratase (194 aa).

Belongs to the imidazoleglycerol-phosphate dehydratase family.

It localises to the cytoplasm. It catalyses the reaction D-erythro-1-(imidazol-4-yl)glycerol 3-phosphate = 3-(imidazol-4-yl)-2-oxopropyl phosphate + H2O. The protein operates within amino-acid biosynthesis; L-histidine biosynthesis; L-histidine from 5-phospho-alpha-D-ribose 1-diphosphate: step 6/9. The polypeptide is Imidazoleglycerol-phosphate dehydratase (Chloroherpeton thalassium (strain ATCC 35110 / GB-78)).